Reading from the N-terminus, the 247-residue chain is UPF0280 protein Mevan_0550 (247 aa).

Belongs to the UPF0280 family.

This is UPF0280 protein Mevan_0550 from Methanococcus vannielii (strain ATCC 35089 / DSM 1224 / JCM 13029 / OCM 148 / SB).